The primary structure comprises 343 residues: Dihydroorotase (343 aa).

Residues H14 and H16 each contribute to the Zn(2+) site. Residues 16–18 and N42 each bind substrate; that span reads HVR. 3 residues coordinate Zn(2+): K98, H135, and H173. An N6-carboxylysine modification is found at K98. Residue H135 coordinates substrate. A substrate-binding site is contributed by L219. Zn(2+) is bound at residue D247. D247 is a catalytic residue. Substrate is bound by residues H251 and A263.

The protein belongs to the metallo-dependent hydrolases superfamily. DHOase family. Class II DHOase subfamily. Homodimer. Requires Zn(2+) as cofactor.

The enzyme catalyses (S)-dihydroorotate + H2O = N-carbamoyl-L-aspartate + H(+). It participates in pyrimidine metabolism; UMP biosynthesis via de novo pathway; (S)-dihydroorotate from bicarbonate: step 3/3. Functionally, catalyzes the reversible cyclization of carbamoyl aspartate to dihydroorotate. In Marinobacter nauticus (strain ATCC 700491 / DSM 11845 / VT8) (Marinobacter aquaeolei), this protein is Dihydroorotase.